Consider the following 849-residue polypeptide: MAP7 domain-containing protein 1 (849 aa).

2 disordered regions span residues 1-151 and 186-210; these read MESG…REER and EQRL…EKNK. The span at 24 to 41 shows a compositional bias: pro residues; sequence EPRPSPEGDPSPPPPPTP. A phosphothreonine mark is found at threonine 49 and threonine 53. Residues serine 72 and serine 95 each carry the phosphoserine modification. Phosphothreonine is present on threonine 99. Residues serine 115 and serine 118 each carry the phosphoserine modification. Phosphothreonine is present on threonine 120. Phosphoserine is present on residues serine 125 and serine 127. Over residues 132-151 the composition is skewed to basic and acidic residues; that stretch reads QDVKKAGERHKLAKERREER. Residues 167 to 223 adopt a coiled-coil conformation; sequence EKAKALREKQLQERRRRLEEQRLKAEQRRAALEERQRQKLEKNKERYEAAIQRSVKK. Phosphoserine occurs at positions 256, 275, 315, 368, and 401. A disordered region spans residues 318-815; that stretch reads TLPRNGRDQG…GFPAKGTAGD (498 aa). Residues 407-437 are compositionally biased toward basic and acidic residues; the sequence is RRLEATPVQKKEKKDKERENEKEKSALARER. Serine 444, serine 448, serine 454, and serine 460 each carry phosphoserine. Over residues 457 to 474 the composition is skewed to polar residues; the sequence is AELSTKSKARPTSPSTTW. Residue lysine 462 forms a Glycyl lysine isopeptide (Lys-Gly) (interchain with G-Cter in SUMO2) linkage. Serine 479 and serine 496 each carry phosphoserine. The span at 479–497 shows a compositional bias: pro residues; the sequence is SPCPSPGPGHTLPPKPPSP. A compositionally biased stretch (basic and acidic residues) spans 523 to 539; sequence PEDKNHSKSRTAEEKEP. Residues 542 to 556 show a composition bias toward pro residues; sequence PASPAPSPVPSPTPA. Phosphoserine occurs at positions 544, 548, and 552. Phosphothreonine is present on threonine 554. The span at 568–582 shows a compositional bias: low complexity; it reads PPDTAVPAVPTVPTF. The stretch at 602–724 forms a coiled coil; sequence TTDREEATRL…QERRKRLEEI (123 aa). Over residues 603–743 the composition is skewed to basic and acidic residues; that stretch reads TDREEATRLL…AETKKQDGKE (141 aa).

Belongs to the MAP7 family.

The protein localises to the cytoplasm. It localises to the cytoskeleton. Its subcellular location is the spindle. It is found in the microtubule organizing center. The protein resides in the centrosome. The protein localises to the midbody. Functionally, microtubule-stabilizing protein involved in the control of cell motility and neurite outgrowth. Facilitate microtubule stabilization through the maintenance of acetylated stable microtubules. The protein is MAP7 domain-containing protein 1 (Map7d1) of Rattus norvegicus (Rat).